A 459-amino-acid polypeptide reads, in one-letter code: Sulfide:quinone oxidoreductase, mitochondrial (459 aa).

A mitochondrion-targeting transit peptide spans 1-24; it reads MLTLNSTIKSVTGSFQSASMLARF. 35–39 is a binding site for FAD; the sequence is GGGSA. Residues Cys204 and Cys383 each act as cysteine persulfide intermediate in the active site.

The protein belongs to the SQRD family. FAD is required as a cofactor.

Its subcellular location is the mitochondrion. Functionally, catalyzes the oxidation of hydrogen sulfide, with the help of a quinone. In Schizosaccharomyces pombe (strain 972 / ATCC 24843) (Fission yeast), this protein is Sulfide:quinone oxidoreductase, mitochondrial (hmt2).